Reading from the N-terminus, the 475-residue chain is Ribulose bisphosphate carboxylase large chain (475 aa).

The propeptide occupies 1–2 (MS). Pro-3 is subject to N-acetylproline. Substrate-binding residues include Asn-123 and Thr-173. The Proton acceptor role is filled by Lys-175. Lys-177 contributes to the substrate binding site. Residues Lys-201, Asp-203, and Glu-204 each coordinate Mg(2+). At Lys-201 the chain carries N6-carboxylysine. His-294 acts as the Proton acceptor in catalysis. 3 residues coordinate substrate: Arg-295, His-327, and Ser-379.

This sequence belongs to the RuBisCO large chain family. Type I subfamily. Heterohexadecamer of 8 large chains and 8 small chains; disulfide-linked. The disulfide link is formed within the large subunit homodimers. It depends on Mg(2+) as a cofactor. Post-translationally, the disulfide bond which can form in the large chain dimeric partners within the hexadecamer appears to be associated with oxidative stress and protein turnover.

The protein localises to the plastid. It localises to the chloroplast. The enzyme catalyses 2 (2R)-3-phosphoglycerate + 2 H(+) = D-ribulose 1,5-bisphosphate + CO2 + H2O. It catalyses the reaction D-ribulose 1,5-bisphosphate + O2 = 2-phosphoglycolate + (2R)-3-phosphoglycerate + 2 H(+). RuBisCO catalyzes two reactions: the carboxylation of D-ribulose 1,5-bisphosphate, the primary event in carbon dioxide fixation, as well as the oxidative fragmentation of the pentose substrate in the photorespiration process. Both reactions occur simultaneously and in competition at the same active site. The protein is Ribulose bisphosphate carboxylase large chain of Welwitschia mirabilis (Tree tumbo).